The following is a 259-amino-acid chain: Indole-3-glycerol phosphate synthase (259 aa).

The protein belongs to the TrpC family.

It catalyses the reaction 1-(2-carboxyphenylamino)-1-deoxy-D-ribulose 5-phosphate + H(+) = (1S,2R)-1-C-(indol-3-yl)glycerol 3-phosphate + CO2 + H2O. It participates in amino-acid biosynthesis; L-tryptophan biosynthesis; L-tryptophan from chorismate: step 4/5. In Dehalococcoides mccartyi (strain CBDB1), this protein is Indole-3-glycerol phosphate synthase.